Here is a 137-residue protein sequence, read N- to C-terminus: Cellular retinoic acid-binding protein 1 (137 aa).

The short motif at 21–31 (KALGVNAMLRK) is the Nuclear localization signal element. Residue 132-134 (RIY) coordinates all-trans-retinoate.

This sequence belongs to the calycin superfamily. Fatty-acid binding protein (FABP) family.

It is found in the cytoplasm. Functionally, cytosolic CRABPs may regulate the access of retinoic acid to the nuclear retinoic acid receptors. The polypeptide is Cellular retinoic acid-binding protein 1 (CRABP1) (Homo sapiens (Human)).